We begin with the raw amino-acid sequence, 315 residues long: Ankyrin repeat domain-containing protein EMB506, chloroplastic (315 aa).

A chloroplast-targeting transit peptide spans 1-39 (MVSSVLSIPPQTCLLPRLPISDSVNCKSKIVYCLSTSVR). The segment covering 44 to 65 (KRQSTARTRSFTETNRRTPSVQ) has biased composition (polar residues). The tract at residues 44–106 (KRQSTARTRS…DNESDWEDDS (63 aa)) is disordered. Acidic residues predominate over residues 72–104 (EDPDDGSDSENEYEGEEEDGIGNDLDNESDWED). ANK repeat units lie at residues 151-180 (KSWK…DIDD), 184-213 (DNQT…NPHL), 217-246 (DGAA…DVNV), 250-279 (EGWT…DKTR), and 283-307 (DGKL…VKLL).

As to quaternary structure, interacts with AKR. No homodimerization observed. In terms of tissue distribution, expressed in roots, inflorescence stems, flowers, siliques, dry seeds and mature cauline leaves.

The protein localises to the plastid. It localises to the chloroplast. Involved in the initial differentiation of the proplastid during the embryo development. Also required for correct cotyledon, true leaf and cauline leaf margin development. In Arabidopsis thaliana (Mouse-ear cress), this protein is Ankyrin repeat domain-containing protein EMB506, chloroplastic (EMB506).